A 336-amino-acid chain; its full sequence is MALKHFLNTQDWSCSELNALLTQARAFKHNKLGNGLKGKSIALVFFNASMRTRSSFELGAFQLGGHAIVLQPGKDAWPIEFDTGTVMEAETEEHICEVARVLGHYVDLIGVRAFPKFLDWTYDRQDIVLNGFAKYSPVPVINMETITHPCQELAHIMALQEHFGTTDLRGKKYVLTWTYHPKPLNTAVANSALTIATRLGMDVTLLCPTPDYVLDERYIDWAQQNIADTGSTFQVSHDIDNAYRGADVIYAKSWGALPFFGNWAMEKPIRDQYRHFIVDEAKMALTNNAVFSHCLPLRRNVKATDAVMDGPNCIAIHEAGNRLHVQKAIMAALASQ.

Carbamoyl phosphate is bound by residues 49 to 52 (SMRT), Trp-77, and Arg-112. Glu-144 is a N(2)-acetyl-L-ornithine binding site. Residue 148 to 151 (HPCQ) coordinates carbamoyl phosphate. Lys-252 and Leu-295 together coordinate N(2)-acetyl-L-ornithine. Carbamoyl phosphate is bound at residue 294 to 295 (CL). Lys-302 carries the N6-carboxylysine modification. A carbamoyl phosphate-binding site is contributed by Arg-322.

This sequence belongs to the aspartate/ornithine carbamoyltransferase superfamily. AOTCase family. As to quaternary structure, homotrimer.

The protein localises to the cytoplasm. It carries out the reaction N(2)-acetyl-L-ornithine + carbamoyl phosphate = N(2)-acetyl-L-citrulline + phosphate + H(+). Its pathway is amino-acid biosynthesis; L-arginine biosynthesis. Its activity is regulated as follows. Carboxylation at Lys-302 increases the catalytic activity of the enzyme. Its function is as follows. Catalyzes the transfer of the carbamoyl group from carbamoyl phosphate to the delta-amino group of N(2)-acetyl-L-ornithine to produce N(2)-acetyl-L-citrulline. This is a step in an alternative arginine biosynthesis pathway. The enzyme has no activity with ornithine. This Xylella fastidiosa (strain 9a5c) protein is N-acetylornithine carbamoyltransferase.